Here is a 310-residue protein sequence, read N- to C-terminus: MVKAGNETQISEFLLLGFSEKQELQPFLFGLFLSMYLVTVLGNLLIILAAISDSCLHTPMYFFLSNLSFVDICFASTMVPKMLVNIQTQSKVITYAGCITQMCFFVLFIVLDSLLLTVMAYDQFVAICHPLHYTVIMSPQLCGLLVLVSWIMSVLNSMLQSLVTLQLSFCTDLEIPHFFCELNEMIHLACSDTFVNNMVMHFAAVLLDGGPLVGILYSYCRIVSSIRAISSTQGKYKALSTCASHLSVVSIFYGTGLGVYLSSTMTQNLHSTAVASVMYTVVTPMLNPFIYSLRNKDIKGALTQFFRGKQ.

Residues 1 to 26 (MVKAGNETQISEFLLLGFSEKQELQP) are Extracellular-facing. N-linked (GlcNAc...) asparagine glycosylation occurs at Asn-6. The helical transmembrane segment at 27–47 (FLFGLFLSMYLVTVLGNLLII) threads the bilayer. Residues 48-55 (LAAISDSC) lie on the Cytoplasmic side of the membrane. The helical transmembrane segment at 56 to 76 (LHTPMYFFLSNLSFVDICFAS) threads the bilayer. Residues 77–100 (TMVPKMLVNIQTQSKVITYAGCIT) lie on the Extracellular side of the membrane. Cys-98 and Cys-190 are disulfide-bonded. Residues 101–121 (QMCFFVLFIVLDSLLLTVMAY) form a helical membrane-spanning segment. The Cytoplasmic portion of the chain corresponds to 122–140 (DQFVAICHPLHYTVIMSPQ). The chain crosses the membrane as a helical span at residues 141-161 (LCGLLVLVSWIMSVLNSMLQS). Residues 162–198 (LVTLQLSFCTDLEIPHFFCELNEMIHLACSDTFVNNM) are Extracellular-facing. Residues 199–218 (VMHFAAVLLDGGPLVGILYS) traverse the membrane as a helical segment. Residues 219–238 (YCRIVSSIRAISSTQGKYKA) are Cytoplasmic-facing. The helical transmembrane segment at 239–259 (LSTCASHLSVVSIFYGTGLGV) threads the bilayer. Topologically, residues 260-272 (YLSSTMTQNLHST) are extracellular. Residues 273-293 (AVASVMYTVVTPMLNPFIYSL) form a helical membrane-spanning segment. At 294 to 310 (RNKDIKGALTQFFRGKQ) the chain is on the cytoplasmic side.

The protein belongs to the G-protein coupled receptor 1 family.

Its subcellular location is the cell membrane. In terms of biological role, odorant receptor. This is Putative olfactory receptor 7A2 (OR7A2P) from Homo sapiens (Human).